Reading from the N-terminus, the 218-residue chain is Ras-related protein R-Ras (218 aa).

The interval 1 to 30 is disordered; the sequence is MSSGAASGTGRGRPRGGGPGPGDPPPSETH. Positions 7–20 are enriched in gly residues; sequence SGTGRGRPRGGGPG. 36–44 contacts GTP; that stretch reads GGGGVGKSA. Residues 58–66 carry the Effector region motif; sequence YDPTIEDSY. Residues 83–87, 142–145, and 172–174 each bind GTP; these read DTAGQ, NKAD, and SAK. Cys215 carries the post-translational modification Cysteine methyl ester. Cys215 carries the S-geranylgeranyl cysteine lipid modification. The propeptide at 216 to 218 is removed in mature form; the sequence is VLL.

It belongs to the small GTPase superfamily. Ras family. In terms of assembly, interacts with PLCE1. Interacts (active GTP-bound form preferentially) with RGS14. Interacts with OSBPL3. Interacts with ZDHHC19. In terms of processing, S-palmitoylated by ZDHHC19, leading to increased association with membranes and with rafts/caveolae as well as enhanced cell viability.

The protein resides in the cell membrane. It catalyses the reaction GTP + H2O = GDP + phosphate + H(+). In terms of biological role, GTP-binding protein with GTPase activity, likely involved in the regulation of MAPK signaling pathway and thereby controlling multiple cellular processes. Regulates the organization of the actin cytoskeleton. With OSPBL3, modulates integrin beta-1 (ITGB1) activity. This Homo sapiens (Human) protein is Ras-related protein R-Ras (RRAS).